A 217-amino-acid chain; its full sequence is Ribosome maturation factor RimP (217 aa).

This sequence belongs to the RimP family.

The protein localises to the cytoplasm. Its function is as follows. Required for maturation of 30S ribosomal subunits. This is Ribosome maturation factor RimP from Nocardia farcinica (strain IFM 10152).